Reading from the N-terminus, the 207-residue chain is Ribonuclease HII (207 aa).

The RNase H type-2 domain occupies 20–207 (QLFAGVDEVG…KPVKRVLGIE (188 aa)). Positions 26, 27, and 118 each coordinate a divalent metal cation.

Belongs to the RNase HII family. Mn(2+) serves as cofactor. Requires Mg(2+) as cofactor.

It localises to the cytoplasm. It catalyses the reaction Endonucleolytic cleavage to 5'-phosphomonoester.. Functionally, endonuclease that specifically degrades the RNA of RNA-DNA hybrids. The protein is Ribonuclease HII of Aliivibrio fischeri (strain MJ11) (Vibrio fischeri).